The chain runs to 276 residues: Large ribosomal subunit protein uL2 (276 aa).

Disordered regions lie at residues 36–55 (PLPRKAGRNNQGKLTVRHRG) and 219–276 (TVRG…GRKK). Over residues 255 to 276 (LGKKTRKKKNRSNKLIVRGRKK) the composition is skewed to basic residues.

It belongs to the universal ribosomal protein uL2 family. In terms of assembly, part of the 50S ribosomal subunit. Forms a bridge to the 30S subunit in the 70S ribosome.

One of the primary rRNA binding proteins. Required for association of the 30S and 50S subunits to form the 70S ribosome, for tRNA binding and peptide bond formation. It has been suggested to have peptidyltransferase activity; this is somewhat controversial. Makes several contacts with the 16S rRNA in the 70S ribosome. This chain is Large ribosomal subunit protein uL2, found in Macrococcus caseolyticus (strain JCSC5402) (Macrococcoides caseolyticum).